The primary structure comprises 592 residues: MSVSLVVIRLELAEHSPVPAGFGFSAAAGEMSDEEIKKTTLASAVACLEGKSPGEKVAIIHQHLGRREMTDVIIETMKSNPDELKTTVEERKSSEASPTAQRSKDHSKECINAAPDSPSKQLPDQISFFSGNPSVEIVHGIMHLYKTNKMTSLKEDVRRSAMLCILTVPAAMTSHDLMKFVAPFNEVIEQMKIIRDSTPNQYMVLIKFRAQADADSFYMTCNGRQFNSIEDDVCQLVYVERAEVLKSEDGASLPVMDLTELPKCTVCLERMDESVNGILTTLCNHSFHSQCLQRWDDTTCPVCRYCQTPEPVEENKCFECGVQENLWICLICGHIGCGRYVSRHAYKHFEETQHTYAMQLTNHRVWDYAGDNYVHRLVASKTDGKIVQYECEGDTCQEEKIDALQLEYSYLLTSQLESQRIYWENKIVRIEKDTAEEINNMKTKFKETIEKCDNLEHKLNDLLKEKQSVERKCTQLNTKVAKLTNELKEEQEMNKCLRANQVLLQNKLKEEERVLKETCDQKDLQITEIQEQLRDVMFYLETQQKINHLPAETRQEIQEGQINIAMASASSPASSGGSGKLPSRKGRSKRGK.

A Phosphoserine modification is found at S52. The disordered stretch occupies residues 78 to 124 (KSNPDELKTTVEERKSSEASPTAQRSKDHSKECINAAPDSPSKQLPD). The segment covering 80-94 (NPDELKTTVEERKSS) has biased composition (basic and acidic residues). S97, S117, and S119 each carry phosphoserine. Residues 264–304 (CTVCLERMDESVNGILTTLCNHSFHSQCLQRWDDTTCPVCR) form an RING-type zinc finger. The UBP-type; degenerate zinc-finger motif lies at 301–393 (PVCRYCQTPE…GKIVQYECEG (93 aa)). Zn(2+) is bound by residues C317, C320, C329, C332, C337, H344, H348, and H354. A coiled-coil region spans residues 429 to 537 (RIEKDTAEEI…EIQEQLRDVM (109 aa)). The disordered stretch occupies residues 565–592 (AMASASSPASSGGSGKLPSRKGRSKRGK). Residues 582-592 (PSRKGRSKRGK) are compositionally biased toward basic residues.

As to quaternary structure, interacts with the nuclear localization signal of BRCA1 and with the N-terminal of KSR1. The C-terminal portion of BCRA1 interacts with DDB1. Expressed in breast epithelial cell lines.

It is found in the cytoplasm. It catalyses the reaction S-ubiquitinyl-[E2 ubiquitin-conjugating enzyme]-L-cysteine + [acceptor protein]-L-lysine = [E2 ubiquitin-conjugating enzyme]-L-cysteine + N(6)-ubiquitinyl-[acceptor protein]-L-lysine.. The protein operates within protein modification; protein ubiquitination. Functionally, negatively regulates MAP kinase activation by limiting the formation of Raf/MEK complexes probably by inactivation of the KSR1 scaffold protein. Also acts as a Ras responsive E3 ubiquitin ligase that, on activation of Ras, is modified by auto-polyubiquitination resulting in the release of inhibition of Raf/MEK complex formation. May also act as a cytoplasmic retention protein with a role in regulating nuclear transport. This Homo sapiens (Human) protein is BRCA1-associated protein.